Here is a 278-residue protein sequence, read N- to C-terminus: MKTKTDFLKMKEQGEPITMLTAYDYPSAKLAEEAEVDMILVGDSLGMVVLGYDSTVPVTVEDMIHHTKAVRRGAKETFIVTDMPFMSYHVSLQETMMNARRIVQESGAHALKVEGAGEVISTIQYLTNAGIPVVAHLGLTPQSVGVLGGYKVQGKDAESAKKLIEDAKKCEEAGAIALVLECVPMQLAELISEQLTIPTIGIGAGQKVDGQVLVYHDLISYGVNRVPKFVKQYTSVQEEIVRGISQYVTEVKTRQFPEEKHSFTMKEEDRLALYGGKQ.

Aspartate 43 and aspartate 82 together coordinate Mg(2+). 3-methyl-2-oxobutanoate is bound by residues 43–44, aspartate 82, and lysine 112; that span reads DS. Glutamate 114 contacts Mg(2+). Glutamate 181 acts as the Proton acceptor in catalysis.

It belongs to the PanB family. As to quaternary structure, homodecamer; pentamer of dimers. The cofactor is Mg(2+).

Its subcellular location is the cytoplasm. The catalysed reaction is 3-methyl-2-oxobutanoate + (6R)-5,10-methylene-5,6,7,8-tetrahydrofolate + H2O = 2-dehydropantoate + (6S)-5,6,7,8-tetrahydrofolate. It functions in the pathway cofactor biosynthesis; (R)-pantothenate biosynthesis; (R)-pantoate from 3-methyl-2-oxobutanoate: step 1/2. Its function is as follows. Catalyzes the reversible reaction in which hydroxymethyl group from 5,10-methylenetetrahydrofolate is transferred onto alpha-ketoisovalerate to form ketopantoate. This Bacillus cereus (strain G9842) protein is 3-methyl-2-oxobutanoate hydroxymethyltransferase.